The sequence spans 253 residues: uncharacterized protein (253 aa).

A compositionally biased stretch (low complexity) spans 1-14 (MKVPILSRLRSLSS). Disordered regions lie at residues 1-192 (MKVP…PKSS) and 212-253 (PETV…AIQL). Basic and acidic residues-rich tracts occupy residues 17–30 (RNNE…EHQV) and 45–60 (KSDK…KSGE). Composition is skewed to low complexity over residues 63–104 (PSTP…GSDS) and 111–154 (KTLS…QTPR). Positions 215 to 235 (VVTSTPRQQSRPPSAQNTPNF) are enriched in polar residues. Over residues 236–253 (TSQGGSRSTSRRQSAIQL) the composition is skewed to low complexity.

This is an uncharacterized protein from Dictyostelium discoideum (Social amoeba).